The chain runs to 387 residues: Yellow-related salivary protein ASP2 (387 aa).

Positions 1 to 18 (MKIFLCLIVVVSLQGVLA) are cleaved as a signal peptide.

Belongs to the major royal jelly protein family. In terms of tissue distribution, female salivary gland (at protein level).

It localises to the secreted. Probably modulates blood feeding of sand flies on vertebrate species by binding and sequestering different mediators involved in the host response. Binds biogenic amines. Binds octopamine with high affinity. Binds serotonin and dopamine with medium affinity. Poorly binds histamine. Does not bind noradrenaline and adrenaline. The chain is Yellow-related salivary protein ASP2 from Phlebotomus orientalis (Phlebotomine sand fly).